A 334-amino-acid chain; its full sequence is Cathepsin L2 (334 aa).

A signal peptide spans 1 to 17; that stretch reads MNLSLVLAAFCLGIASA. Positions 18-113 are cleaved as a propeptide — activation peptide; the sequence is VPKFDQNLDT…KVFREPLFLD (96 aa). 2 disulfides stabilise this stretch: cysteine 135/cysteine 178 and cysteine 169/cysteine 211. Residue cysteine 138 is part of the active site. An N-linked (GlcNAc...) asparagine glycan is attached at asparagine 221. A disulfide bridge connects residues cysteine 270 and cysteine 323. Histidine 277 is a catalytic residue. Residue asparagine 292 is glycosylated (N-linked (GlcNAc...) asparagine). The active site involves asparagine 301.

The protein belongs to the peptidase C1 family. As to expression, predominantly expressed in the thymus and testis. Also expressed in corneal epithelium, and to a lesser extent in conjunctival epithelium and skin.

It localises to the lysosome. The catalysed reaction is The recombinant enzyme hydrolyzes proteins (serum albumin, collagen) and synthetic substrates (Z-Phe-Arg-NHMec &gt; Z-Leu-Arg-NHMec &gt; Z-Val-Arg-NHMec).. With respect to regulation, inhibited by CST6. Cysteine protease. May have an important role in corneal physiology. This chain is Cathepsin L2 (CTSV), found in Homo sapiens (Human).